Reading from the N-terminus, the 795-residue chain is Nucleolar complex protein 3 homolog (795 aa).

Disordered regions lie at residues 1–88 (MKPM…PLDM), 124–144 (RDDV…EPEK), and 168–190 (IPSE…EVPE). 2 stretches are compositionally biased toward basic and acidic residues: residues 22–39 (LKLD…ESSA) and 46–58 (QKQL…DVRS). Residues 74 to 88 (EEEYEVEEESLPLDM) show a composition bias toward acidic residues. The segment covering 171–181 (EEQEENEEEMD) has biased composition (acidic residues). A coiled-coil region spans residues 447-492 (SYKDKKKNLSRMQRKWKKAEEKLERELLEAEASESKEKKLKLNTET).

The protein belongs to the CBF/MAK21 family.

It is found in the nucleus. Its subcellular location is the nucleolus. The protein is Nucleolar complex protein 3 homolog (noc3l) of Xenopus laevis (African clawed frog).